The primary structure comprises 430 residues: uncharacterized protein (430 aa).

Its subcellular location is the cytoplasm. The protein resides in the nucleus. This is an uncharacterized protein from Schizosaccharomyces pombe (strain 972 / ATCC 24843) (Fission yeast).